The chain runs to 658 residues: Carnitine O-palmitoyltransferase 2, mitochondrial (658 aa).

The transit peptide at 1–26 (MARLLTSSSALRWGAVSSSQSVGRAY) directs the protein to the mitochondrion. At 27–179 (SSGSPDTEYV…GYLEPEIFHL (153 aa)) the chain is on the mitochondrial matrix side. The note=Mitochondrial inner membrane intramembrane region spans 180–209 (NPAKSDTLTFRKLIRFVPSSLSWYGAYMVN). Topologically, residues 210–658 (AYPLDMSQYF…FTVLQDKPIK (449 aa)) are mitochondrial matrix. Catalysis depends on histidine 373, which acts as the Proton acceptor. Position 453–465 (453–465 (GKELLKTQKLSPD)) interacts with CoA. Positions 487, 489, and 500 each coordinate (R)-carnitine.

This sequence belongs to the carnitine/choline acetyltransferase family.

Its subcellular location is the mitochondrion inner membrane. The enzyme catalyses (R)-carnitine + hexadecanoyl-CoA = O-hexadecanoyl-(R)-carnitine + CoA. The catalysed reaction is octanoyl-CoA + (R)-carnitine = O-octanoyl-(R)-carnitine + CoA. It catalyses the reaction decanoyl-CoA + (R)-carnitine = O-decanoyl-(R)-carnitine + CoA. It carries out the reaction dodecanoyl-CoA + (R)-carnitine = O-dodecanoyl-R-carnitine + CoA. The enzyme catalyses tetradecanoyl-CoA + (R)-carnitine = O-tetradecanoyl-(R)-carnitine + CoA. The catalysed reaction is (R)-carnitine + octadecanoyl-CoA = O-octadecanoyl-(R)-carnitine + CoA. It catalyses the reaction eicosanoyl-CoA + (R)-carnitine = O-eicosanoyl-(R)-carnitine + CoA. It carries out the reaction (9Z)-tetradecenoyl-CoA + (R)-carnitine = O-(9Z)-tetradecenoyl-(R)-carnitine + CoA. The enzyme catalyses (5Z)-tetradecenoyl-CoA + (R)-carnitine = O-(5Z)-tetradecenoyl-(R)-carnitine + CoA. The catalysed reaction is (R)-carnitine + (9Z)-octadecenoyl-CoA = O-(9Z)-octadecenoyl-(R)-carnitine + CoA. It catalyses the reaction 4,8-dimethylnonanoyl-CoA + (R)-carnitine = O-4,8-dimethylnonanoyl-(R)-carnitine + CoA. It participates in lipid metabolism; fatty acid beta-oxidation. Involved in the intramitochondrial synthesis of acylcarnitines from accumulated acyl-CoA metabolites. Reconverts acylcarnitines back into the respective acyl-CoA esters that can then undergo beta-oxidation, an essential step for the mitochondrial uptake of long-chain fatty acids and their subsequent beta-oxidation in the mitochondrion. Active with medium (C8-C12) and long-chain (C14-C18) acyl-CoA esters. The polypeptide is Carnitine O-palmitoyltransferase 2, mitochondrial (cpt2) (Xenopus tropicalis (Western clawed frog)).